The chain runs to 298 residues: MTAYQAIDRHASGHRFDTERRWAAALELGFEARAESEPTPVTRLVRRRHHGPLRVQRPFYPEGKTGCCHVYLLHPPGGLVSGDELRIEATVAEGGHALLTTPAAAKLYKADSHGVAWGQHTRLQVAKDAILEYLPQETIAFDGSRGLQTTTIELATGARTLGWEVLALGRPASDLPFATGALEQRFHLSLDGQPLWLERQLLDPKHRRFNGPWGQGGATVQATLWAVGLDDEAAAIDVLRAQLPDHNRWAVTRRRGVLLLRYLGTERNEAWALCEQAWHLLRPMLASVPAHTPRIWLT.

It belongs to the UreD family. As to quaternary structure, ureD, UreF and UreG form a complex that acts as a GTP-hydrolysis-dependent molecular chaperone, activating the urease apoprotein by helping to assemble the nickel containing metallocenter of UreC. The UreE protein probably delivers the nickel.

It localises to the cytoplasm. Functionally, required for maturation of urease via the functional incorporation of the urease nickel metallocenter. This chain is Urease accessory protein UreD, found in Marinobacter nauticus (strain ATCC 700491 / DSM 11845 / VT8) (Marinobacter aquaeolei).